The chain runs to 278 residues: Undecaprenyl-diphosphatase 2 (278 aa).

The next 7 helical transmembrane spans lie at 43-63 (GAAF…VYFW), 88-108 (ARLG…GLFF), 119-139 (LYIT…ADRI), 149-169 (LIWR…IPGV), 194-214 (FLLA…KSIG), 226-246 (LATL…LKLV), and 254-274 (FVWY…TGVI).

This sequence belongs to the UppP family.

The protein localises to the cell inner membrane. The enzyme catalyses di-trans,octa-cis-undecaprenyl diphosphate + H2O = di-trans,octa-cis-undecaprenyl phosphate + phosphate + H(+). Functionally, catalyzes the dephosphorylation of undecaprenyl diphosphate (UPP). Confers resistance to bacitracin. The polypeptide is Undecaprenyl-diphosphatase 2 (Agrobacterium fabrum (strain C58 / ATCC 33970) (Agrobacterium tumefaciens (strain C58))).